The primary structure comprises 433 residues: D-amino acid dehydrogenase (433 aa).

FAD is bound at residue 3-17; the sequence is VLVLGSGVIGTASAY.

This sequence belongs to the DadA oxidoreductase family. FAD serves as cofactor.

It catalyses the reaction a D-alpha-amino acid + A + H2O = a 2-oxocarboxylate + AH2 + NH4(+). It functions in the pathway amino-acid degradation; D-alanine degradation; NH(3) and pyruvate from D-alanine: step 1/1. Functionally, oxidative deamination of D-amino acids. The polypeptide is D-amino acid dehydrogenase (Pseudomonas putida (strain W619)).